A 773-amino-acid chain; its full sequence is DEAD-box ATP-dependent RNA helicase 32 (773 aa).

The disordered stretch occupies residues 28-71; the sequence is IDAGKPARGTRPPPLSKSSSSPADTAAAKRGAKGAGGVPSKAAG. Positions 43-56 are enriched in low complexity; sequence SKSSSSPADTAAAK. The Q motif motif lies at 80 to 108; the sequence is ARFDELPLSNKTKDGLRKAGYTEMSEIQR. The 177-residue stretch at 111 to 287 folds into the Helicase ATP-binding domain; sequence LPHALCGRDV…RVSLKDPEYI (177 aa). 124–131 contributes to the ATP binding site; the sequence is AKTGSGKT. The short motif at 235-238 is the DEAD box element; that stretch reads DEAD. Positions 309 to 462 constitute a Helicase C-terminal domain; sequence PLEQKLNMLW…IKKPNTEQLQ (154 aa). Residues 664–715 are a coiled coil; that stretch reads DKDKISQRYAEMLREMQEHDKEDKLEHKRILREKKLQKKLKLKRKRNEEMDA. Residues 699–708 show a composition bias toward basic residues; it reads LQKKLKLKRK. The disordered stretch occupies residues 699–755; it reads LQKKLKLKRKRNEEMDAGSENSGSESDRDQRTASKGKKRYFNSDDEEGSKDAAKDGD.

It belongs to the DEAD box helicase family. DDX10/DBP4 subfamily.

The catalysed reaction is ATP + H2O = ADP + phosphate + H(+). This is DEAD-box ATP-dependent RNA helicase 32 from Oryza sativa subsp. japonica (Rice).